A 208-amino-acid polypeptide reads, in one-letter code: Small ribosomal subunit protein uS4 (208 aa).

In terms of domain architecture, S4 RNA-binding spans 98–164 (TRLDNVVYRL…PKVKSIREIA (67 aa)).

Belongs to the universal ribosomal protein uS4 family. Part of the 30S ribosomal subunit. Contacts protein S5. The interaction surface between S4 and S5 is involved in control of translational fidelity.

In terms of biological role, one of the primary rRNA binding proteins, it binds directly to 16S rRNA where it nucleates assembly of the body of the 30S subunit. Functionally, with S5 and S12 plays an important role in translational accuracy. The sequence is that of Small ribosomal subunit protein uS4 from Ruminiclostridium cellulolyticum (strain ATCC 35319 / DSM 5812 / JCM 6584 / H10) (Clostridium cellulolyticum).